The chain runs to 122 residues: MAAPVDLELKKAFTELQAKVIDTQQKVKLADVQIEQLNRTKKHAHLTDTEIMTLVDETNMYEGVGRMFILQSKEAIHNQLLEKQKIAEEKIKELEQKKSYLERSVKEAEDNIREMLMARRAQ.

Ala-2 is subject to N-acetylalanine.

The protein belongs to the prefoldin subunit beta family. In terms of assembly, heterohexamer of two PFD-alpha type and four PFD-beta type subunits.

Binds specifically to cytosolic chaperonin (c-CPN) and transfers target proteins to it. Binds to nascent polypeptide chain and promotes folding in an environment in which there are many competing pathways for nonnative proteins. The protein is Prefoldin subunit 1 (PFDN1) of Bos taurus (Bovine).